The following is a 630-amino-acid chain: DNA topoisomerase 4 subunit B (630 aa).

ATP contacts are provided by residues Tyr-5, Asn-42, Asp-69, 110–116 (GLHGVGI), and Lys-334. The Toprim domain occupies 412-525 (TELFLVEGDS…NGHVYVALPP (114 aa)). The Mg(2+) site is built by Glu-418, Asp-490, and Asp-492.

This sequence belongs to the type II topoisomerase family. ParE type 1 subfamily. As to quaternary structure, heterotetramer composed of ParC and ParE. Requires Mg(2+) as cofactor. It depends on Mn(2+) as a cofactor. Ca(2+) is required as a cofactor.

It carries out the reaction ATP-dependent breakage, passage and rejoining of double-stranded DNA.. Its function is as follows. Topoisomerase IV is essential for chromosome segregation. It relaxes supercoiled DNA. Performs the decatenation events required during the replication of a circular DNA molecule. The chain is DNA topoisomerase 4 subunit B from Salmonella typhi.